Here is a 72-residue protein sequence, read N- to C-terminus: Large ribosomal subunit protein bL31 (72 aa).

Zn(2+) contacts are provided by C16, C18, C38, and C41.

It belongs to the bacterial ribosomal protein bL31 family. Type A subfamily. As to quaternary structure, part of the 50S ribosomal subunit. Zn(2+) serves as cofactor.

In terms of biological role, binds the 23S rRNA. This is Large ribosomal subunit protein bL31 from Aliivibrio salmonicida (strain LFI1238) (Vibrio salmonicida (strain LFI1238)).